We begin with the raw amino-acid sequence, 481 residues long: Cobyric acid synthase (481 aa).

Residues 244–431 (VLRVVIPVLP…LHGLFDAPEA (188 aa)) enclose the GATase cobBQ-type domain. C325 functions as the Nucleophile in the catalytic mechanism. Residue H423 is part of the active site.

This sequence belongs to the CobB/CobQ family. CobQ subfamily.

The protein operates within cofactor biosynthesis; adenosylcobalamin biosynthesis. Functionally, catalyzes amidations at positions B, D, E, and G on adenosylcobyrinic A,C-diamide. NH(2) groups are provided by glutamine, and one molecule of ATP is hydrogenolyzed for each amidation. The protein is Cobyric acid synthase of Ralstonia nicotianae (strain ATCC BAA-1114 / GMI1000) (Ralstonia solanacearum).